The following is a 510-amino-acid chain: Putative folylpolyglutamate synthase (510 aa).

98-101 (GKGS) is a binding site for ATP. Mg(2+) contacts are provided by Ser-122, Glu-189, and His-217. The ATP site is built by Arg-342 and Asp-357.

This sequence belongs to the folylpolyglutamate synthase family. It depends on a monovalent cation as a cofactor.

The protein resides in the mitochondrion inner membrane. It is found in the mitochondrion matrix. Its subcellular location is the cytoplasm. It catalyses the reaction (6S)-5,6,7,8-tetrahydrofolyl-(gamma-L-Glu)(n) + L-glutamate + ATP = (6S)-5,6,7,8-tetrahydrofolyl-(gamma-L-Glu)(n+1) + ADP + phosphate + H(+). Its pathway is cofactor biosynthesis; tetrahydrofolylpolyglutamate biosynthesis. In terms of biological role, catalyzes conversion of folates to polyglutamate derivatives allowing concentration of folate compounds in the cell and the intracellular retention of these cofactors, which are important substrates for most of the folate-dependent enzymes that are involved in one-carbon transfer reactions involved in purine, pyrimidine and amino acid synthesis. The polypeptide is Putative folylpolyglutamate synthase (Caenorhabditis elegans).